The chain runs to 284 residues: Tegument protein UL23 (284 aa).

It belongs to the herpesviridae US22 family. In terms of assembly, interacts with host NMI; this interaction inhibits NMI interaction with STAT1.

Its subcellular location is the virion tegument. It is found in the host cytoplasm. In terms of biological role, plays a role in the inhibition of host innate immune response by disrupting the interaction between NMI and STAT1. In turn, NMI-mediated transcription of interferon-gamma stimulated genes is inhibited. This is Tegument protein UL23 (UL23) from Homo sapiens (Human).